The following is an 887-amino-acid chain: Oxysterol-binding protein-related protein 3 (887 aa).

The segment at 1–35 (MMSDEKNLGVSQKLVSPSRSTSSCSSKQGSRQDSW) is disordered. Phosphoserine occurs at positions 16 and 34. A compositionally biased stretch (low complexity) spans 16-32 (SPSRSTSSCSSKQGSRQ). The 96-residue stretch at 51-146 (PPVQKGFLLK…WVSKLRHHRM (96 aa)) folds into the PH domain. The FFAT 1 signature appears at 161-167 (HFFSGST). Serine 200, serine 251, and serine 265 each carry phosphoserine. The segment at 261–326 (GSFESPKKEK…KNYSDGSETS (66 aa)) is disordered. Residues 268–280 (KEKRSHRRWRSRA) are compositionally biased toward basic residues. Phosphoserine occurs at positions 304, 309, 320, 323, 371, 372, 410, 425, 437, and 440. Residues 450–454 (EFFDA) carry the FFAT 2 motif.

This sequence belongs to the OSBP family. Homodimer. Interacts with RRAS. Interacts (phosphorylated form) with VAPA. Interacts with OSBPL6. In terms of processing, phosphorylation is enhanced in vitro by phorbol-12-myristate-13-acetate (PMA), forskolin and calcium ionophore A23187. Phosphorylation seems to be stimulated in conditions of low cell-cell (or cell-matrix) adhesion. Expressed in a subset of small lymphocytes (at protein level). Expressed at high concentration in kidney, lymph node and thymus. Expressed at moderate concentration in stomach, jejunum, ileum, appendix, spleen, leukocytes, trachea, lung and thyroid gland. Expressed at low concentration in whole brain, esophagus, duodenum, ileocecum, colon, skeletal muscle, bone marrow, placenta and mammary gland. Isoform 1a, isoform 1b, isoform 1c and isoform 1d are highly expressed in brain, bone marrow, colon, kidney, lung, skeletal muscle, spleen, thymus and thyroid. Not expressed in heart and liver. Isoform 2a, isoform 2b, isoform 2c and isoform 2d are expressed in brain, bone marrow, kidney, skeletal muscle, spleen, thymus and thyroid. Not expressed in heart, liver and lung.

The protein localises to the endoplasmic reticulum membrane. It is found in the cytoplasm. The protein resides in the cytosol. It localises to the cell membrane. Its subcellular location is the cell projection. The protein localises to the filopodium tip. It is found in the nucleus membrane. In terms of biological role, phosphoinositide-binding protein which associates with both cell and endoplasmic reticulum (ER) membranes. Can bind to the ER membrane protein VAPA and recruit VAPA to plasma membrane sites, thus linking these intracellular compartments. The ORP3-VAPA complex stimulates RRAS signaling which in turn attenuates integrin beta-1 (ITGB1) activation at the cell surface. With VAPA, may regulate ER morphology. Has a role in regulation of the actin cytoskeleton, cell polarity and cell adhesion. Binds to phosphoinositides with preference for PI(3,4)P2 and PI(3,4,5)P3. Also binds 25-hydroxycholesterol and cholesterol. In Homo sapiens (Human), this protein is Oxysterol-binding protein-related protein 3 (OSBPL3).